Consider the following 158-residue polypeptide: Transcriptional regulator MraZ (158 aa).

2 SpoVT-AbrB domains span residues 5–50 (IYET…GGVY) and 91–134 (AVEC…SQSE).

This sequence belongs to the MraZ family. Forms oligomers.

The protein localises to the cytoplasm. It localises to the nucleoid. The polypeptide is Transcriptional regulator MraZ (Geobacter metallireducens (strain ATCC 53774 / DSM 7210 / GS-15)).